Here is a 234-residue protein sequence, read N- to C-terminus: Large ribosomal subunit protein uL1 (234 aa).

This sequence belongs to the universal ribosomal protein uL1 family. As to quaternary structure, part of the 50S ribosomal subunit.

Binds directly to 23S rRNA. The L1 stalk is quite mobile in the ribosome, and is involved in E site tRNA release. Its function is as follows. Protein L1 is also a translational repressor protein, it controls the translation of the L11 operon by binding to its mRNA. This chain is Large ribosomal subunit protein uL1, found in Desulfosudis oleivorans (strain DSM 6200 / JCM 39069 / Hxd3) (Desulfococcus oleovorans).